We begin with the raw amino-acid sequence, 562 residues long: NAD-dependent malic enzyme (562 aa).

Catalysis depends on tyrosine 101, which acts as the Proton donor. Arginine 154 contributes to the NAD(+) binding site. The active-site Proton acceptor is the lysine 172. Residues glutamate 243, aspartate 244, and aspartate 267 each contribute to the a divalent metal cation site. The NAD(+) site is built by aspartate 267 and asparagine 415.

The protein belongs to the malic enzymes family. In terms of assembly, homotetramer. Requires Mg(2+) as cofactor. It depends on Mn(2+) as a cofactor.

The enzyme catalyses (S)-malate + NAD(+) = pyruvate + CO2 + NADH. The catalysed reaction is oxaloacetate + H(+) = pyruvate + CO2. In Aliivibrio fischeri (strain MJ11) (Vibrio fischeri), this protein is NAD-dependent malic enzyme.